We begin with the raw amino-acid sequence, 247 residues long: UPF0259 membrane protein BUAPTUC7_273 (247 aa).

Helical transmembrane passes span 20–40, 85–105, 114–134, 137–157, 188–208, and 218–238; these read IGAIFFISIFATFMNILIDMF, IMESLISKTTLLGSIIILISF, IVSSIRTFFLFFPSLFILNFL, FIIQIGFMLLIIPGILLSIIL, IIGPGVLFWMCGKFILTMLLA, and LFLISNISMNILFSILIIYLF.

It belongs to the UPF0259 family.

The protein localises to the cell membrane. The chain is UPF0259 membrane protein BUAPTUC7_273 from Buchnera aphidicola subsp. Acyrthosiphon pisum (strain Tuc7).